The primary structure comprises 194 residues: Cilia- and flagella-associated protein 107 (194 aa).

Mn stretches follow at residues Thr-45–His-60 and Ile-95–Tyr-107.

As to quaternary structure, microtubule inner protein component of sperm flagellar doublet microtubules. Expressed in airway epithelial cells.

It localises to the cytoplasm. It is found in the cytoskeleton. The protein resides in the cilium axoneme. The protein localises to the flagellum axoneme. Microtubule inner protein (MIP) part of the dynein-decorated doublet microtubules (DMTs) in cilia axoneme, which is required for motile cilia beating. The sequence is that of Cilia- and flagella-associated protein 107 from Homo sapiens (Human).